The chain runs to 196 residues: Peroxisome assembly protein 22 (196 aa).

A helical transmembrane segment spans residues 15–37 (LWIAALVAASIVTISYKVYSSYI).

It belongs to the peroxin-22 family.

The protein resides in the peroxisome membrane. Involved in peroxisome biogenesis. This is Peroxisome assembly protein 22 (PEX22) from Debaryomyces hansenii (strain ATCC 36239 / CBS 767 / BCRC 21394 / JCM 1990 / NBRC 0083 / IGC 2968) (Yeast).